The following is a 277-amino-acid chain: Putative ankyrin repeat protein L81 (277 aa).

ANK repeat units lie at residues 150–179 (FGQTPMWIATTRCNYRNYVFLKKHGSDLHQ) and 183–215 (QGRSLLHATANAVNSECLDIFKDLIANGVDLYQ).

The polypeptide is Putative ankyrin repeat protein L81 (Acanthamoeba polyphaga (Amoeba)).